A 326-amino-acid chain; its full sequence is MKNDNKANDIIIDSVKVPDSYKPPKNPIVFCHGLSGFDKLILIPSVFHLTNLISNSIVHNMAENFMQDDEDKSDNKYTNLLEIEYWIGVKKFLQSKGCTVITTKVPGFGSIEERAMALDAQLQKEVKKIESKDKRHSLNLIAHSMGGLDCRYLICNIKNRNYDILSLTTISTPHRGSEMADYVVDLFENLNALRVSQKILPICFYQLTTAYMKYFNLVTPNSPKVSYFSYGCSFVPKWYNVFCTPWKIVYERSKGCPNDGLVTINSSKWGEYRGTLKDMDHLDVINWKNKLQDDWSKFFRTTTVGEKVDILNFYLKITDDLARKGF.

Positions 142–146 match the (A/G)XSXG lipase motif motif; it reads AHSMG.

In terms of assembly, interacts with MIA40; forms mixed disulfide intermediates with MIA40.

It is found in the mitochondrion. Its subcellular location is the mitochondrion intermembrane space. It carries out the reaction a triacylglycerol + H2O = a diacylglycerol + a fatty acid + H(+). The enzyme catalyses 1,2,3-tri-(9Z-octadecenoyl)-glycerol + H2O = di-(9Z)-octadecenoylglycerol + (9Z)-octadecenoate + H(+). The catalysed reaction is 1,2,3-tributanoylglycerol + H2O = dibutanoylglycerol + butanoate + H(+). It catalyses the reaction 1,2,3-trioctanoylglycerol + H2O = dioctanoylglycerol + octanoate + H(+). It carries out the reaction di-(9Z)-octadecenoylglycerol + H2O = (9Z-octadecenoyl)-glycerol + (9Z)-octadecenoate + H(+). The enzyme catalyses dioctanoylglycerol + H2O = octanoylglycerol + octanoate + H(+). In terms of biological role, mitochondrial triacylglycerol (TAG) lipase with activity toward long-chain diacylglycerols (DAGs) and triacylglycerols (TAGs). Involved in mitochondrial lipid metabolism. In Saccharomyces cerevisiae (strain ATCC 204508 / S288c) (Baker's yeast), this protein is Triacylglycerol lipase 2 (TGL2).